Reading from the N-terminus, the 260-residue chain is Acetylglutamate kinase (260 aa).

Residues 46-47, arginine 68, and asparagine 160 contribute to the substrate site; that span reads GG.

Belongs to the acetylglutamate kinase family. ArgB subfamily.

The protein resides in the cytoplasm. It catalyses the reaction N-acetyl-L-glutamate + ATP = N-acetyl-L-glutamyl 5-phosphate + ADP. The protein operates within amino-acid biosynthesis; L-arginine biosynthesis; N(2)-acetyl-L-ornithine from L-glutamate: step 2/4. Its function is as follows. Catalyzes the ATP-dependent phosphorylation of N-acetyl-L-glutamate. The sequence is that of Acetylglutamate kinase from Shewanella oneidensis (strain ATCC 700550 / JCM 31522 / CIP 106686 / LMG 19005 / NCIMB 14063 / MR-1).